The sequence spans 273 residues: ATP synthase subunit delta (273 aa).

It belongs to the ATPase delta chain family. As to quaternary structure, F-type ATPases have 2 components, F(1) - the catalytic core - and F(0) - the membrane proton channel. F(1) has five subunits: alpha(3), beta(3), gamma(1), delta(1), epsilon(1). F(0) has three main subunits: a(1), b(2) and c(10-14). The alpha and beta chains form an alternating ring which encloses part of the gamma chain. F(1) is attached to F(0) by a central stalk formed by the gamma and epsilon chains, while a peripheral stalk is formed by the delta and b chains.

The protein resides in the cell membrane. Functionally, f(1)F(0) ATP synthase produces ATP from ADP in the presence of a proton or sodium gradient. F-type ATPases consist of two structural domains, F(1) containing the extramembraneous catalytic core and F(0) containing the membrane proton channel, linked together by a central stalk and a peripheral stalk. During catalysis, ATP synthesis in the catalytic domain of F(1) is coupled via a rotary mechanism of the central stalk subunits to proton translocation. Its function is as follows. This protein is part of the stalk that links CF(0) to CF(1). It either transmits conformational changes from CF(0) to CF(1) or is implicated in proton conduction. This is ATP synthase subunit delta from Streptomyces avermitilis (strain ATCC 31267 / DSM 46492 / JCM 5070 / NBRC 14893 / NCIMB 12804 / NRRL 8165 / MA-4680).